The following is a 118-amino-acid chain: Putative cytochrome P450 family member 4F30 (118 aa).

The segment at 1-64 is disordered; that stretch reads MVTPAGCLGG…GPLHILGTDG (64 aa). Residues 28-43 show a composition bias toward polar residues; the sequence is RAGQTGQAVSGAQVSS.

This is Putative cytochrome P450 family member 4F30 (CYP4F30P) from Homo sapiens (Human).